The sequence spans 178 residues: Large ribosomal subunit protein uL6 (178 aa).

Belongs to the universal ribosomal protein uL6 family. In terms of assembly, part of the 50S ribosomal subunit.

Its function is as follows. This protein binds to the 23S rRNA, and is important in its secondary structure. It is located near the subunit interface in the base of the L7/L12 stalk, and near the tRNA binding site of the peptidyltransferase center. The protein is Large ribosomal subunit protein uL6 of Leifsonia xyli subsp. xyli (strain CTCB07).